The chain runs to 195 residues: MATSSISAALLSPLTLRNASSSSTKQDFSTLSSLNLRRTLTPTLQSGHTLSNSSNFATFAAPGALEVLETSPDSFEDGSETSKISIAADSDQMAPKQKIRIKLRSYWVPLIEDSCKQIMDAARTTNAKIMGPVPLPTKKRIYCVLKSPHVHKDARFHFEIRTHQRLIDILYPTAQTIDSLMQLDLPAGVDVEVKL.

Residues 1 to 59 (MATSSISAALLSPLTLRNASSSSTKQDFSTLSSLNLRRTLTPTLQSGHTLSNSSNFATF) constitute a chloroplast transit peptide.

It belongs to the universal ribosomal protein uS10 family. Component of the chloroplast small ribosomal subunit (SSU). Mature 70S chloroplast ribosomes of higher plants consist of a small (30S) and a large (50S) subunit. The 30S small subunit contains 1 molecule of ribosomal RNA (16S rRNA) and 24 different proteins. The 50S large subunit contains 3 rRNA molecules (23S, 5S and 4.5S rRNA) and 33 different proteins.

It is found in the plastid. The protein resides in the chloroplast. Functionally, component of the chloroplast ribosome (chloro-ribosome), a dedicated translation machinery responsible for the synthesis of chloroplast genome-encoded proteins, including proteins of the transcription and translation machinery and components of the photosynthetic apparatus. In Spinacia oleracea (Spinach), this protein is Small ribosomal subunit protein uS10c (RPS10).